We begin with the raw amino-acid sequence, 453 residues long: Probable multidrug resistance protein NorM (453 aa).

12 helical membrane-spanning segments follow: residues 12–34, 54–76, 96–118, 128–150, 162–184, 194–216, 243–265, 285–307, 319–338, 358–380, 387–406, and 416–438; these read VLFLKIFFPILIYQFANYSASFV, TSIWNPFFTFLTGIVSALVPIIG, YLALGLSVVLLGMVLFLAPTILN, AVAVRYLWFLSIGIIPLLLFSVI, LSMYLMLLLLPLNSGFNYLLIYG, AGAGLGTSLAYWVLLGISVLVLF, LGLPIGGTVFAEVAVFSVVGLIM, LMYAFPMSISSAMAIVVSYEVGA, LGRWTALIFAAFTLTFLYIF, RFLTYSLFFQLADTFAAPLQGIL, VIPFYLGLLGYWGVAIPVAT, and AYSYWIGLIISLIVSGALYRWRL.

This sequence belongs to the multi antimicrobial extrusion (MATE) (TC 2.A.66.1) family.

It is found in the cell membrane. Multidrug efflux pump. This chain is Probable multidrug resistance protein NorM (norM), found in Streptococcus pneumoniae (strain ATCC BAA-255 / R6).